The chain runs to 274 residues: Orotidine 5'-phosphate decarboxylase (274 aa).

Residues aspartate 40, lysine 62–histidine 64, aspartate 93–threonine 102, tyrosine 227, and arginine 245 contribute to the substrate site. Residue lysine 95 is the Proton donor of the active site.

Belongs to the OMP decarboxylase family.

The enzyme catalyses orotidine 5'-phosphate + H(+) = UMP + CO2. Its pathway is pyrimidine metabolism; UMP biosynthesis via de novo pathway; UMP from orotate: step 2/2. This is Orotidine 5'-phosphate decarboxylase (URA3) from Coccidioides posadasii (strain RMSCC 757 / Silveira) (Valley fever fungus).